We begin with the raw amino-acid sequence, 25 residues long: Histone H4 (25 aa).

The segment covering 1–14 has biased composition (gly residues); it reads MSGRGKGGKGLGKG. The tract at residues 1–25 is disordered; sequence MSGRGKGGKGLGKGGAKRHRKVLRD. An N-acetylserine modification is found at Ser2. An N6-acetyllysine mark is found at Lys6, Lys9, Lys13, Lys17, and Lys21. The span at 15-25 shows a compositional bias: basic residues; that stretch reads GAKRHRKVLRD. Residues 17–21 mediate DNA binding; sequence KRHRK.

Belongs to the histone H4 family. The nucleosome is a histone octamer containing two molecules each of H2A, H2B, H3 and H4 assembled in one H3-H4 heterotetramer and two H2A-H2B heterodimers. The octamer wraps approximately 147 bp of DNA.

The protein resides in the nucleus. Its subcellular location is the chromosome. Functionally, core component of nucleosome. Nucleosomes wrap and compact DNA into chromatin, limiting DNA accessibility to the cellular machineries which require DNA as a template. Histones thereby play a central role in transcription regulation, DNA repair, DNA replication and chromosomal stability. DNA accessibility is regulated via a complex set of post-translational modifications of histones, also called histone code, and nucleosome remodeling. The polypeptide is Histone H4 (Medicago sativa (Alfalfa)).